We begin with the raw amino-acid sequence, 247 residues long: Uroporphyrinogen-III C-methyltransferase (247 aa).

S-adenosyl-L-homocysteine is bound by residues proline 12, 117-118 (TA), methionine 168, alanine 197, and alanine 225.

This sequence belongs to the precorrin methyltransferase family.

The catalysed reaction is uroporphyrinogen III + 2 S-adenosyl-L-methionine = precorrin-2 + 2 S-adenosyl-L-homocysteine + H(+). It functions in the pathway cofactor biosynthesis; adenosylcobalamin biosynthesis; precorrin-2 from uroporphyrinogen III: step 1/1. It participates in porphyrin-containing compound metabolism; siroheme biosynthesis; precorrin-2 from uroporphyrinogen III: step 1/1. In terms of biological role, catalyzes the two successive C-2 and C-7 methylation reactions involved in the conversion of uroporphyrinogen III to precorrin-2 via the intermediate formation of precorrin-1. It is a step in the biosynthesis of both cobalamin (vitamin B12) and siroheme. The polypeptide is Uroporphyrinogen-III C-methyltransferase (Pseudomonas fluorescens).